The sequence spans 242 residues: Ubiquinone biosynthesis O-methyltransferase (242 aa).

R44, G64, D85, and M129 together coordinate S-adenosyl-L-methionine.

It belongs to the methyltransferase superfamily. UbiG/COQ3 family.

It catalyses the reaction a 3-demethylubiquinol + S-adenosyl-L-methionine = a ubiquinol + S-adenosyl-L-homocysteine + H(+). The enzyme catalyses a 3-(all-trans-polyprenyl)benzene-1,2-diol + S-adenosyl-L-methionine = a 2-methoxy-6-(all-trans-polyprenyl)phenol + S-adenosyl-L-homocysteine + H(+). Its pathway is cofactor biosynthesis; ubiquinone biosynthesis. Its function is as follows. O-methyltransferase that catalyzes the 2 O-methylation steps in the ubiquinone biosynthetic pathway. This chain is Ubiquinone biosynthesis O-methyltransferase, found in Citrobacter koseri (strain ATCC BAA-895 / CDC 4225-83 / SGSC4696).